Consider the following 251-residue polypeptide: Flap endonuclease Xni (251 aa).

Aspartate 104 is a Mg(2+) binding site. Residues 160–249 (VQPQQLPDYW…IDGNLQQLRL (90 aa)) enclose the 5'-3' exonuclease domain. Residues leucine 171, alanine 172, proline 180, valine 182, and isoleucine 185 each coordinate K(+). Positions 184-189 (GIGPKS) are interaction with DNA.

This sequence belongs to the Xni family. The cofactor is Mg(2+). Requires K(+) as cofactor.

In terms of biological role, has flap endonuclease activity. During DNA replication, flap endonucleases cleave the 5'-overhanging flap structure that is generated by displacement synthesis when DNA polymerase encounters the 5'-end of a downstream Okazaki fragment. In Escherichia coli O81 (strain ED1a), this protein is Flap endonuclease Xni.